The sequence spans 355 residues: Peptide chain release factor 1 (355 aa).

Residue Gln231 is modified to N5-methylglutamine.

Belongs to the prokaryotic/mitochondrial release factor family. Methylated by PrmC. Methylation increases the termination efficiency of RF1.

It localises to the cytoplasm. Its function is as follows. Peptide chain release factor 1 directs the termination of translation in response to the peptide chain termination codons UAG and UAA. This Nautilia profundicola (strain ATCC BAA-1463 / DSM 18972 / AmH) protein is Peptide chain release factor 1.